The sequence spans 198 residues: A-type ATP synthase subunit E (198 aa).

It belongs to the V-ATPase E subunit family. As to quaternary structure, has multiple subunits with at least A(3), B(3), C, D, E, F, H, I and proteolipid K(x).

The protein resides in the cell membrane. Functionally, component of the A-type ATP synthase that produces ATP from ADP in the presence of a proton gradient across the membrane. The chain is A-type ATP synthase subunit E from Pyrococcus furiosus (strain ATCC 43587 / DSM 3638 / JCM 8422 / Vc1).